A 297-amino-acid polypeptide reads, in one-letter code: 4-diphosphocytidyl-2-C-methyl-D-erythritol kinase (297 aa).

The active site involves lysine 14. 99-109 serves as a coordination point for ATP; the sequence is PVAAGIGGGSA. Aspartate 141 is a catalytic residue.

It belongs to the GHMP kinase family. IspE subfamily.

It catalyses the reaction 4-CDP-2-C-methyl-D-erythritol + ATP = 4-CDP-2-C-methyl-D-erythritol 2-phosphate + ADP + H(+). The protein operates within isoprenoid biosynthesis; isopentenyl diphosphate biosynthesis via DXP pathway; isopentenyl diphosphate from 1-deoxy-D-xylulose 5-phosphate: step 3/6. Functionally, catalyzes the phosphorylation of the position 2 hydroxy group of 4-diphosphocytidyl-2C-methyl-D-erythritol. The sequence is that of 4-diphosphocytidyl-2-C-methyl-D-erythritol kinase from Bradyrhizobium diazoefficiens (strain JCM 10833 / BCRC 13528 / IAM 13628 / NBRC 14792 / USDA 110).